Reading from the N-terminus, the 155-residue chain is MNIKTIEGNLSAKDSKFAIVTSRFNDFIGGRLVEGALDCIVRHDGSEENIAIYKCPGAFEVPMVAKKLAQSGKWDAVIAIGVLIRGATAHFDYIAAEATKGIAQASLECGVPISFGVLTTDTIEQAIERAGTKAGNKGWDAASAAIEMVNLYKQM.

5-amino-6-(D-ribitylamino)uracil contacts are provided by residues F24, 58 to 60 (AFE), and 82 to 84 (VLI). 87 to 88 (AT) contacts (2S)-2-hydroxy-3-oxobutyl phosphate. H90 (proton donor) is an active-site residue. 5-amino-6-(D-ribitylamino)uracil is bound at residue F115. (2S)-2-hydroxy-3-oxobutyl phosphate is bound at residue R129.

It belongs to the DMRL synthase family.

It catalyses the reaction (2S)-2-hydroxy-3-oxobutyl phosphate + 5-amino-6-(D-ribitylamino)uracil = 6,7-dimethyl-8-(1-D-ribityl)lumazine + phosphate + 2 H2O + H(+). The protein operates within cofactor biosynthesis; riboflavin biosynthesis; riboflavin from 2-hydroxy-3-oxobutyl phosphate and 5-amino-6-(D-ribitylamino)uracil: step 1/2. Functionally, catalyzes the formation of 6,7-dimethyl-8-ribityllumazine by condensation of 5-amino-6-(D-ribitylamino)uracil with 3,4-dihydroxy-2-butanone 4-phosphate. This is the penultimate step in the biosynthesis of riboflavin. The sequence is that of 6,7-dimethyl-8-ribityllumazine synthase from Chloroherpeton thalassium (strain ATCC 35110 / GB-78).